The sequence spans 257 residues: uncharacterized protein (257 aa).

The protein to yeast YKR015c.

This is an uncharacterized protein from Saccharomyces cerevisiae (strain ATCC 204508 / S288c) (Baker's yeast).